A 236-amino-acid chain; its full sequence is Glucosamine-6-phosphate deaminase (236 aa).

Asp62 functions as the Proton acceptor; for enolization step in the catalytic mechanism. Asn128 serves as the catalytic For ring-opening step. The active-site Proton acceptor; for ring-opening step is the His130. Glu135 (for ring-opening step) is an active-site residue.

Belongs to the glucosamine/galactosamine-6-phosphate isomerase family. NagB subfamily.

It catalyses the reaction alpha-D-glucosamine 6-phosphate + H2O = beta-D-fructose 6-phosphate + NH4(+). It functions in the pathway amino-sugar metabolism; N-acetylneuraminate degradation; D-fructose 6-phosphate from N-acetylneuraminate: step 5/5. Functionally, catalyzes the reversible isomerization-deamination of glucosamine 6-phosphate (GlcN6P) to form fructose 6-phosphate (Fru6P) and ammonium ion. This chain is Glucosamine-6-phosphate deaminase, found in Lacticaseibacillus paracasei (strain ATCC 334 / BCRC 17002 / CCUG 31169 / CIP 107868 / KCTC 3260 / NRRL B-441) (Lactobacillus paracasei).